A 347-amino-acid chain; its full sequence is Protein-glutamate methylesterase/protein-glutamine glutaminase 1 (347 aa).

Residues Arg6–Lys123 enclose the Response regulatory domain. Asp57 bears the 4-aspartylphosphate mark. In terms of domain architecture, CheB-type methylesterase spans Phe150–Arg342. Active-site residues include Ser162, His188, and Asp284.

The protein belongs to the CheB family. Post-translationally, phosphorylated by CheA. Phosphorylation of the N-terminal regulatory domain activates the methylesterase activity.

The protein localises to the cytoplasm. The catalysed reaction is [protein]-L-glutamate 5-O-methyl ester + H2O = L-glutamyl-[protein] + methanol + H(+). The enzyme catalyses L-glutaminyl-[protein] + H2O = L-glutamyl-[protein] + NH4(+). Involved in chemotaxis. Part of a chemotaxis signal transduction system that modulates chemotaxis in response to various stimuli. Catalyzes the demethylation of specific methylglutamate residues introduced into the chemoreceptors (methyl-accepting chemotaxis proteins or MCP) by CheR. Also mediates the irreversible deamidation of specific glutamine residues to glutamic acid. This Rhizobium johnstonii (strain DSM 114642 / LMG 32736 / 3841) (Rhizobium leguminosarum bv. viciae) protein is Protein-glutamate methylesterase/protein-glutamine glutaminase 1.